Reading from the N-terminus, the 251-residue chain is Ribonuclease 3 (251 aa).

Positions 3–125 (LATLETRLGH…LFGAVFLDAG (123 aa)) constitute an RNase III domain. Residue Glu38 coordinates Mg(2+). The active site involves Asp42. Asp111 and Glu114 together coordinate Mg(2+). The active site involves Glu114. The DRBM domain maps to 152–222 (DAKTLLQEFL…AKLALEAALV (71 aa)).

The protein belongs to the ribonuclease III family. As to quaternary structure, homodimer. It depends on Mg(2+) as a cofactor.

It is found in the cytoplasm. It carries out the reaction Endonucleolytic cleavage to 5'-phosphomonoester.. Its function is as follows. Digests double-stranded RNA. Involved in the processing of primary rRNA transcript to yield the immediate precursors to the large and small rRNAs (23S and 16S). Processes some mRNAs, and tRNAs when they are encoded in the rRNA operon. Processes pre-crRNA and tracrRNA of type II CRISPR loci if present in the organism. This is Ribonuclease 3 from Bordetella avium (strain 197N).